A 257-amino-acid chain; its full sequence is Hydroxyacylglutathione hydrolase (257 aa).

Residues histidine 54, histidine 56, aspartate 58, histidine 59, histidine 113, aspartate 137, and histidine 175 each coordinate Zn(2+).

It belongs to the metallo-beta-lactamase superfamily. Glyoxalase II family. In terms of assembly, monomer. The cofactor is Zn(2+).

It catalyses the reaction an S-(2-hydroxyacyl)glutathione + H2O = a 2-hydroxy carboxylate + glutathione + H(+). It participates in secondary metabolite metabolism; methylglyoxal degradation; (R)-lactate from methylglyoxal: step 2/2. Thiolesterase that catalyzes the hydrolysis of S-D-lactoyl-glutathione to form glutathione and D-lactic acid. This is Hydroxyacylglutathione hydrolase from Synechocystis sp. (strain ATCC 27184 / PCC 6803 / Kazusa).